Reading from the N-terminus, the 128-residue chain is Large-conductance mechanosensitive channel (128 aa).

At M1 to V16 the chain is on the cytoplasmic side. Residues V17–L45 traverse the membrane as a helical segment. Over G46–N74 the chain is Periplasmic. Residues Y75 to M94 traverse the membrane as a helical segment. Topologically, residues M95 to K128 are cytoplasmic.

It belongs to the MscL family. Homopentamer.

The protein resides in the cell inner membrane. Functionally, channel that opens in response to stretch forces in the membrane lipid bilayer. Forms a nonselective ion channel with a conductance of about 4 nanosiemens. May participate in the regulation of osmotic pressure changes within the cell. In Haemophilus influenzae (strain ATCC 51907 / DSM 11121 / KW20 / Rd), this protein is Large-conductance mechanosensitive channel.